A 312-amino-acid chain; its full sequence is Ribosomal protein L11 methyltransferase (312 aa).

T160, G181, D203, and N246 together coordinate S-adenosyl-L-methionine.

Belongs to the methyltransferase superfamily. PrmA family.

The protein resides in the cytoplasm. It carries out the reaction L-lysyl-[protein] + 3 S-adenosyl-L-methionine = N(6),N(6),N(6)-trimethyl-L-lysyl-[protein] + 3 S-adenosyl-L-homocysteine + 3 H(+). Methylates ribosomal protein L11. This chain is Ribosomal protein L11 methyltransferase, found in Staphylococcus aureus (strain COL).